A 77-amino-acid polypeptide reads, in one-letter code: MAGRKGGRAKRRKVCFFTANGITRIDYKDVDLLKRFVSERGKILPRRVTGTSAKYQRKLTVAIKRARQMALLPYVGE.

It belongs to the bacterial ribosomal protein bS18 family. In terms of assembly, part of the 30S ribosomal subunit. Forms a tight heterodimer with protein bS6.

Functionally, binds as a heterodimer with protein bS6 to the central domain of the 16S rRNA, where it helps stabilize the platform of the 30S subunit. This chain is Small ribosomal subunit protein bS18, found in Bacillus cereus (strain ATCC 10987 / NRS 248).